The chain runs to 474 residues: Glutamate--tRNA ligase (474 aa).

The 'HIGH' region motif lies at 9-19 (PSPTGYLHVGG). Positions 240–244 (KLSKR) match the 'KMSKS' region motif. Position 243 (Lys243) interacts with ATP.

It belongs to the class-I aminoacyl-tRNA synthetase family. Glutamate--tRNA ligase type 1 subfamily. In terms of assembly, monomer.

The protein localises to the cytoplasm. The catalysed reaction is tRNA(Glu) + L-glutamate + ATP = L-glutamyl-tRNA(Glu) + AMP + diphosphate. Its function is as follows. Catalyzes the attachment of glutamate to tRNA(Glu) in a two-step reaction: glutamate is first activated by ATP to form Glu-AMP and then transferred to the acceptor end of tRNA(Glu). This Vibrio cholerae serotype O1 (strain ATCC 39315 / El Tor Inaba N16961) protein is Glutamate--tRNA ligase.